The primary structure comprises 318 residues: Coproporphyrin III ferrochelatase (318 aa).

Positions 186 and 268 each coordinate Fe(2+).

The protein belongs to the ferrochelatase family.

The protein resides in the cytoplasm. The catalysed reaction is Fe-coproporphyrin III + 2 H(+) = coproporphyrin III + Fe(2+). Its pathway is porphyrin-containing compound metabolism; protoheme biosynthesis. Its function is as follows. Involved in coproporphyrin-dependent heme b biosynthesis. Catalyzes the insertion of ferrous iron into coproporphyrin III to form Fe-coproporphyrin III. This is Coproporphyrin III ferrochelatase from Lactococcus lactis subsp. cremoris (strain MG1363).